Reading from the N-terminus, the 241-residue chain is Small ribosomal subunit protein uS2 (241 aa).

Belongs to the universal ribosomal protein uS2 family.

In Cronobacter sakazakii (strain ATCC BAA-894) (Enterobacter sakazakii), this protein is Small ribosomal subunit protein uS2.